The sequence spans 115 residues: Secapin (115 aa).

The first 24 residues, 1–24 (MRFQVYILHLCFFILVVLTYLSQG), serve as a signal peptide directing secretion. A propeptide spanning residues 25–90 (QSYTTTTTTS…STENFDITNR (66 aa)) is cleaved from the precursor. A disulfide bond links Cys-99 and Cys-110.

It belongs to the secapin family. Expressed in the epidermis, fat body and venom gland.

It is found in the secreted. Functionally, serine protease inhibitor which exhibits antifibrinolytic, antielastolytic and antimicrobial activities. Displays antimicrobial activity against bacteria and fungi. Likely functions in the innate immune response to microbial infection and possibly in the venom, as an antifibrinolytic agent. The recombinant form inhibits trypsin (IC(50)=80.02 nM, Ki=127.25 nM), chymotrypsin (IC(50)=393.78 nM, Ki=432.59 nM), the microbial serine proteases subtilisin A (IC(50)=379.20 nM, Ki=492.77 nM) and proteinase K (IC(50)=189.43 nM, Ki=271.76 nM), plasmin (IC(50)=457.98 nM, Ki=502.91 nM), human elastase (IC(50)=347.81 nM, Ki=469.90 nM) and porcine elastase (IC(50)=94.70 nM, Ki=125.62 nM). Does not inhibit thrombin. Binds to human plasmin and inhibits the plasmin-mediated degradation of fibrin to fibrin degradation products, indicating its role as an anti-fibrinolytic agent. Also binds to bacterial and fungal surfaces. Exhibits antimicrobial activity against the Gram-positive bacteria B.thuringiensis (MIC=4.21 uM) and P.larvae (MIC=11.13 uM), the Gram-negative bacteria E.coli (MIC=6.50 uM) and the multidrug-resistant A.baumannii (MIC=5 ug/ml, MBC=10 ug/ml), as well as against the fungus B.bassiana (IC(50)=2.57 uM). The synthetic peptide also exhibits antimicrobial activity against the Gram-positive bacterium P.larvae (MIC=41.12 uM), the Gram-negative bacterium P.aeruginosa (MIC=65.75 uM), and the fungus B.bassiana (IC(50)=44.27 uM). Is also able to prevent A.baumannii biofilm formation and eliminate established A.baumannii biofilms. In vitro, does not induce an inflammatory response and has no cytotoxic activity against mammalian cells. The sequence is that of Secapin from Apis cerana (Indian honeybee).